The following is a 372-amino-acid chain: UDP-N-acetylglucosamine--N-acetylmuramyl-(pentapeptide) pyrophosphoryl-undecaprenol N-acetylglucosamine transferase (372 aa).

UDP-N-acetyl-alpha-D-glucosamine is bound by residues 16–18 (TGG), asparagine 128, arginine 164, serine 192, isoleucine 250, and glutamine 295.

This sequence belongs to the glycosyltransferase 28 family. MurG subfamily.

The protein localises to the cell inner membrane. It carries out the reaction di-trans,octa-cis-undecaprenyl diphospho-N-acetyl-alpha-D-muramoyl-L-alanyl-D-glutamyl-meso-2,6-diaminopimeloyl-D-alanyl-D-alanine + UDP-N-acetyl-alpha-D-glucosamine = di-trans,octa-cis-undecaprenyl diphospho-[N-acetyl-alpha-D-glucosaminyl-(1-&gt;4)]-N-acetyl-alpha-D-muramoyl-L-alanyl-D-glutamyl-meso-2,6-diaminopimeloyl-D-alanyl-D-alanine + UDP + H(+). The protein operates within cell wall biogenesis; peptidoglycan biosynthesis. Its function is as follows. Cell wall formation. Catalyzes the transfer of a GlcNAc subunit on undecaprenyl-pyrophosphoryl-MurNAc-pentapeptide (lipid intermediate I) to form undecaprenyl-pyrophosphoryl-MurNAc-(pentapeptide)GlcNAc (lipid intermediate II). This Paraburkholderia xenovorans (strain LB400) protein is UDP-N-acetylglucosamine--N-acetylmuramyl-(pentapeptide) pyrophosphoryl-undecaprenol N-acetylglucosamine transferase.